The primary structure comprises 572 residues: Phosphoglucomutase-1 (572 aa).

Residues Thr-23, Arg-27, 120 to 121, and Lys-133 each bind substrate; that span reads SH. The active-site Phosphoserine intermediate is Ser-120. Position 120 (Ser-120) interacts with Mg(2+). The Mg(2+) site is built by Asp-288, Asp-290, and Asp-292. Substrate-binding positions include 292 to 293, Thr-356, 375 to 377, Lys-388, and Arg-524; these read DR and EES.

This sequence belongs to the phosphohexose mutase family. It depends on Mg(2+) as a cofactor.

It is found in the cytoplasm. It carries out the reaction alpha-D-glucose 1-phosphate = alpha-D-glucose 6-phosphate. Functionally, this enzyme participates in both the breakdown and synthesis of glucose. The sequence is that of Phosphoglucomutase-1 (pgmA) from Dictyostelium discoideum (Social amoeba).